Reading from the N-terminus, the 82-residue chain is T-complex protein 1 subunit gamma (82 aa).

G15 provides a ligand contact to ADP. Residue G15 participates in ATP binding. D66 serves as a coordination point for Mg(2+). ADP contacts are provided by G67, T68, T69, and S70. G67, T68, and T69 together coordinate ATP.

This sequence belongs to the TCP-1 chaperonin family. Component of the chaperonin-containing T-complex (TRiC), a hexadecamer composed of two identical back-to-back stacked rings enclosing a protein folding chamber. Each ring is made up of eight different subunits: TCP1/CCT1, CCT2, CCT3, CCT4, CCT5, CCT6A/CCT6, CCT7, CCT8. Interacts with PACRG. Interacts with DNAAF4. Interacts with DLEC1.

It is found in the cytoplasm. The catalysed reaction is ATP + H2O = ADP + phosphate + H(+). Component of the chaperonin-containing T-complex (TRiC), a molecular chaperone complex that assists the folding of actin, tubulin and other proteins upon ATP hydrolysis. The TRiC complex mediates the folding of WRAP53/TCAB1, thereby regulating telomere maintenance. As part of the TRiC complex may play a role in the assembly of BBSome, a complex involved in ciliogenesis regulating transports vesicles to the cilia. The sequence is that of T-complex protein 1 subunit gamma (CCT3) from Sus scrofa (Pig).